The sequence spans 542 residues: MFS thioclapurine efflux transporter tcpA (542 aa).

Over residues 1 to 10 the composition is skewed to basic and acidic residues; sequence MATVGTEEKN. Residues 1–24 are disordered; the sequence is MATVGTEEKNPIGSASNTAEPNVT. Residues 13 to 24 show a composition bias toward polar residues; sequence GSASNTAEPNVT. A glycan (N-linked (GlcNAc...) asparagine) is linked at N22. 3 consecutive transmembrane segments (helical) span residues 32–52, 75–97, and 103–123; these read SGFK…LCGL, GWYT…KLYT, and MILL…AAAP. Residue N124 is glycosylated (N-linked (GlcNAc...) asparagine). 6 helical membrane passes run 133–153, 161–181, 193–213, 234–254, 265–285, and 307–327; these read AIAG…LVHA, ALLG…PFIG, CFII…FFVF, IPEI…LQWG, IIAL…LQVL, and IFAL…PIYF. N332 carries an N-linked (GlcNAc...) asparagine glycan. A helical transmembrane segment spans residues 339–359; that stretch reads GVNVMPLILGFLVMSIISGVI. N-linked (GlcNAc...) asparagine glycosylation is present at N361. 4 helical membrane passes run 370 to 390, 396 to 416, 427 to 447, and 500 to 520; these read MFLC…FDVG, WIGY…QPIV, VPFG…IFVA, and VLGQ…LGSL.

The protein belongs to the major facilitator superfamily.

The protein resides in the cell membrane. Its function is as follows. MFS efflux transporter probably involved in thioclapurine export. The sequence is that of MFS thioclapurine efflux transporter tcpA from Claviceps purpurea (strain 20.1) (Ergot fungus).